The sequence spans 527 residues: Peptide chain release factor 3 (527 aa).

The tr-type G domain occupies 9–278 (NKRRTFAIIS…GLTQWAPKPQ (270 aa)). Residues 18-25 (SHPDAGKT), 86-90 (DTPGH), and 140-143 (NKLD) contribute to the GTP site.

This sequence belongs to the TRAFAC class translation factor GTPase superfamily. Classic translation factor GTPase family. PrfC subfamily.

Its subcellular location is the cytoplasm. In terms of biological role, increases the formation of ribosomal termination complexes and stimulates activities of RF-1 and RF-2. It binds guanine nucleotides and has strong preference for UGA stop codons. It may interact directly with the ribosome. The stimulation of RF-1 and RF-2 is significantly reduced by GTP and GDP, but not by GMP. This Haemophilus influenzae (strain ATCC 51907 / DSM 11121 / KW20 / Rd) protein is Peptide chain release factor 3 (prfC).